The following is a 277-amino-acid chain: Probable endonuclease 4 (277 aa).

Zn(2+) contacts are provided by His69, His109, Glu145, Asp179, His182, His214, Asp227, His229, and Glu259.

This sequence belongs to the AP endonuclease 2 family. Zn(2+) serves as cofactor.

The catalysed reaction is Endonucleolytic cleavage to 5'-phosphooligonucleotide end-products.. Its function is as follows. Endonuclease IV plays a role in DNA repair. It cleaves phosphodiester bonds at apurinic or apyrimidinic (AP) sites, generating a 3'-hydroxyl group and a 5'-terminal sugar phosphate. The sequence is that of Probable endonuclease 4 from Bacteroides thetaiotaomicron (strain ATCC 29148 / DSM 2079 / JCM 5827 / CCUG 10774 / NCTC 10582 / VPI-5482 / E50).